The primary structure comprises 403 residues: Nucleolar protein 13 (403 aa).

Basic and acidic residues-rich tracts occupy residues 1-35 and 75-97; these read MSET…RKAE and KSIE…KDAQ. Disordered stretches follow at residues 1 to 43 and 72 to 116; these read MSET…IDLK and IDPK…EVVK. Residue S2 is modified to N-acetylserine. S2 is subject to Phosphoserine. Over residues 99-108 the composition is skewed to polar residues; the sequence is EESTINTPTG. At T105 the chain carries Phosphothreonine. RRM domains follow at residues 125–219 and 239–317; these read YGVW…DSEN and RILF…YGED. Positions 313–329 are enriched in basic and acidic residues; it reads EYGEDRSKRQVRKKVEN. Residues 313–403 are disordered; that stretch reads EYGEDRSKRQ…PSQGKKVKFD (91 aa). The segment covering 330–344 has biased composition (polar residues); it reads VSRNNSSSFDISNNK. The residue at position 335 (S335) is a Phosphoserine. Basic and acidic residues predominate over residues 345 to 361; it reads GYDRAGQDNGSKPEYKR. A compositionally biased stretch (polar residues) spans 371–381; the sequence is DSNNRTKSSVA.

The protein localises to the nucleus. It localises to the nucleolus. The sequence is that of Nucleolar protein 13 (NOP13) from Saccharomyces cerevisiae (strain ATCC 204508 / S288c) (Baker's yeast).